The primary structure comprises 379 residues: MRVLAAMSGGVDSAVAAARAVEAGHDVVGVHLALSRMPGTLRTGSRGCCTIEDSRDAWRACDVLGIPYYVWDFSERFKEDVVQDFIDEYAAGRTPNPCMRCNERIKFAALLEKAIALGFDAVCTGHYAKVITDADGNPELHRAADWAKDQSYVLGVLTHEQLKHSMFPLADTPSKAEVRAEAERRGLSVANKPDSHDICFIPDGDTAGWLAEKIEMTTGDIVDEAGTKVGEHPGANAFTVGQRRGLKLGTPAADGKPRFVLEIRPKENKVVVGPEALLAIDEIRGIKVSWAGLPIAEVATGDEFDCHAQVRAHGDPVPATARMERLTDDDGAERTNLVVTLATPLRGVAPGQTVVLYQGSRVLGQATIDTARSLQRAAL.

ATP contacts are provided by residues 6 to 13 and Leu-32; that span reads AMSGGVDS. The active-site Nucleophile is the Cys-101. An intrachain disulfide couples Cys-101 to Cys-199. Gly-125 serves as a coordination point for ATP. The segment at 148 to 150 is interaction with tRNA; that stretch reads KDQ. Residue Cys-199 is the Cysteine persulfide intermediate of the active site.

Belongs to the MnmA/TRMU family.

The protein localises to the cytoplasm. The catalysed reaction is S-sulfanyl-L-cysteinyl-[protein] + uridine(34) in tRNA + AH2 + ATP = 2-thiouridine(34) in tRNA + L-cysteinyl-[protein] + A + AMP + diphosphate + H(+). In terms of biological role, catalyzes the 2-thiolation of uridine at the wobble position (U34) of tRNA, leading to the formation of s(2)U34. This is tRNA-specific 2-thiouridylase MnmA from Arthrobacter sp. (strain FB24).